The sequence spans 110 residues: Large ribosomal subunit protein uL22 (110 aa).

The protein belongs to the universal ribosomal protein uL22 family. In terms of assembly, part of the 50S ribosomal subunit.

In terms of biological role, this protein binds specifically to 23S rRNA; its binding is stimulated by other ribosomal proteins, e.g. L4, L17, and L20. It is important during the early stages of 50S assembly. It makes multiple contacts with different domains of the 23S rRNA in the assembled 50S subunit and ribosome. Its function is as follows. The globular domain of the protein is located near the polypeptide exit tunnel on the outside of the subunit, while an extended beta-hairpin is found that lines the wall of the exit tunnel in the center of the 70S ribosome. The polypeptide is Large ribosomal subunit protein uL22 (Photorhabdus laumondii subsp. laumondii (strain DSM 15139 / CIP 105565 / TT01) (Photorhabdus luminescens subsp. laumondii)).